We begin with the raw amino-acid sequence, 434 residues long: MQVSVETTQGLGRRVTITVPAADIQKAVDSELKKAAKTVRIDGFRKGHVPMSMVKQRYGMSVLNDVLGDLMQRNFINAIIENKVNPVGAPDYKPEQYKEGEDFVYSVEFEVFPEIELKDLESIEVVKPIVTVKDEDVDNMLETLRKQQAEWKDKEGEVAAEDRVTVDFNGSIDGEEFEGGKAEDFVLAMGQGRMIPGFEEGLIGHKAGEEFTIDVTFPEDYHAENLKGKKAQFAINLKKVEERELPELTEEFIKRFGIADGSVDGLRAEVRKNMERELKNAIRTRVKSQVIDGLVKANEVDVPAAAVDSEIEVLQRQAAQRFGGDEKQALQLPRELFEEQAKRRVIVGLLLGEVINSNELKAEDERVKALIDEMASAYEDPSEVVEFYNKNEQLMNNIRNLALEEQAVEKILATAKVTEKETNFTELMNEVQMG.

The PPIase FKBP-type domain occupies 161–246 (EDRVTVDFNG…LKKVEERELP (86 aa)).

The protein belongs to the FKBP-type PPIase family. Tig subfamily.

It localises to the cytoplasm. The catalysed reaction is [protein]-peptidylproline (omega=180) = [protein]-peptidylproline (omega=0). Functionally, involved in protein export. Acts as a chaperone by maintaining the newly synthesized protein in an open conformation. Functions as a peptidyl-prolyl cis-trans isomerase. The polypeptide is Trigger factor (Proteus mirabilis (strain HI4320)).